A 305-amino-acid chain; its full sequence is MWRGRDVITMRDFGRGELEELFETAKYMEKYAKSRVDFLKGKIMAVAFFEPSTRTRLSFETAMRRLGGDVIGFWGAEGTSVEKGETLADTIRMLDAYSNIIVIRHKLEGAAKLAAEVAESPVINGGDGAFNHPTQAMLDLYTIWREFGHIDGLNIGLMGDLRYARTINSLLEALANFDVRTFLISPEYLRPRAETLDYVKSRGLKLSFHTNVEEVIHELDVLYVVRVQRERFLDPLEYERVKGSYRVTLEILKKAKKHLAILHPLPRVDEIDHRLDNTPHAKYFKQAALGVPLRMALIYLILSQP.

The carbamoyl phosphate site is built by arginine 54 and threonine 55. Lysine 83 lines the L-aspartate pocket. Carbamoyl phosphate contacts are provided by arginine 104, histidine 132, and glutamine 135. L-aspartate is bound by residues arginine 165 and arginine 226. The carbamoyl phosphate site is built by leucine 265 and proline 266.

It belongs to the aspartate/ornithine carbamoyltransferase superfamily. ATCase family. Heterooligomer of catalytic and regulatory chains.

It catalyses the reaction carbamoyl phosphate + L-aspartate = N-carbamoyl-L-aspartate + phosphate + H(+). It participates in pyrimidine metabolism; UMP biosynthesis via de novo pathway; (S)-dihydroorotate from bicarbonate: step 2/3. Functionally, catalyzes the condensation of carbamoyl phosphate and aspartate to form carbamoyl aspartate and inorganic phosphate, the committed step in the de novo pyrimidine nucleotide biosynthesis pathway. This chain is Aspartate carbamoyltransferase catalytic subunit, found in Pyrobaculum arsenaticum (strain DSM 13514 / JCM 11321 / PZ6).